The chain runs to 216 residues: Somatotropin (216 aa).

The signal sequence occupies residues Met1 to Ala26. His45 serves as a coordination point for Zn(2+). Cysteines 78 and 189 form a disulfide. Residue Ser131 is modified to Phosphoserine. Glu198 is a binding site for Zn(2+). Residues Cys206 and Cys214 are joined by a disulfide bond.

It belongs to the somatotropin/prolactin family.

It is found in the secreted. In terms of biological role, plays an important role in growth control. Its major role in stimulating body growth is to stimulate the liver and other tissues to secrete IGF1. It stimulates both the differentiation and proliferation of myoblasts. It also stimulates amino acid uptake and protein synthesis in muscle and other tissues. The sequence is that of Somatotropin (GH1) from Equus caballus (Horse).